A 796-amino-acid polypeptide reads, in one-letter code: MTKDKEPIVKSFHFVCLMIIIVGTRIQFSDGNEFAVDKSKRGLIHVPKDLPLKTKVLDMSQNYIAELQVSDMSFLSELTVLRLSHNRIQLLDLSVFKFNQDLEYLDLSHNQLQKISCHPIVSFRHLDLSFNDFKALPICKEFGNLSQLNFLGLSAMKLQKLDLLPIAHLHLSYILLDLRNYYIKENETESLQILNAKTLHLVFHPTSLFAIQVNISVNTLGCLQLTNIKLNDDNCQVFIKFLSELTRGSTLLNFTLNHIETTWKCLVRVFQFLWPKPVEYLNIYNLTIIESIREEDFTYSKTTLKALTIEHITNQVFLFSQTALYTVFSEMNIMMLTISDTPFIHMLCPHAPSTFKFLNFTQNVFTDSIFEKCSTLVKLETLILQKNGLKDLFKVGLMTKDMPSLEILDVSWNSLESGRHKENCTWVESIVVLNLSSNMLTDSVFRCLPPRIKVLDLHSNKIKSVPKQVVKLEALQELNVAFNSLTDLPGCGSFSSLSVLIIDHNSVSHPSADFFQSCQKMRSIKAGDNPFQCTCELREFVKNIDQVSSEVLEGWPDSYKCDYPESYRGSPLKDFHMSELSCNITLLIVTIGATMLVLAVTVTSLCIYLDLPWYLRMVCQWTQTRRRARNIPLEELQRNLQFHAFISYSEHDSAWVKSELVPYLEKEDIQICLHERNFVPGKSIVENIINCIEKSYKSIFVLSPNFVQSEWCHYELYFAHHNLFHEGSNNLILILLEPIPQNSIPNKYHKLKALMTQRTYLQWPKEKSKRGLFWANIRAAFNMKLTLVTENNDVKS.

The signal sequence occupies residues 1-31; sequence MTKDKEPIVKSFHFVCLMIIIVGTRIQFSDG. At 32–586 the chain is on the extracellular side; sequence NEFAVDKSKR…MSELSCNITL (555 aa). LRR repeat units follow at residues 54-77, 78-101, 102-122, 123-147, 148-168, 169-196, 197-219, 220-250, 251-277, 278-303, 304-330, 331-354, 355-378, 379-404, 405-429, 430-450, 451-474, 475-496, and 497-520; these read TKVL…FLSE, LTVL…FNQD, LEYL…PIVS, FRHL…NLSQ, LNFL…PIAH, LHLS…ILNA, KTLH…SVNT, LGCL…RGST, LLNF…WPKP, VEYL…SKTT, LKAL…VFSE, MNIM…APST, FKFL…TLVK, LETL…DMPS, LEIL…WVES, IVVL…CLPP, RIKV…KLEA, LQEL…SFSS, and LSVL…SCQK. Cys-117 and Cys-139 form a disulfide bridge. Asn-144 carries an N-linked (GlcNAc...) asparagine glycan. N-linked (GlcNAc...) asparagine glycosylation is found at Asn-186 and Asn-214. Residues Cys-235 and Cys-265 are joined by a disulfide bond. Asn-253 and Asn-285 each carry an N-linked (GlcNAc...) asparagine glycan. Cys-348 and Cys-373 are joined by a disulfide. Residue Asn-359 is glycosylated (N-linked (GlcNAc...) asparagine). Asn-423 and Asn-434 each carry an N-linked (GlcNAc...) asparagine glycan. Cysteines 424 and 447 form a disulfide. The LRRCT domain maps to 521–575; the sequence is MRSIKAGDNPFQCTCELREFVKNIDQVSSEVLEGWPDSYKCDYPESYRGSPLKDF. Asn-583 is a glycosylation site (N-linked (GlcNAc...) asparagine). The helical transmembrane segment at 587 to 607 threads the bilayer; that stretch reads LIVTIGATMLVLAVTVTSLCI. Over 608–796 the chain is Cytoplasmic; the sequence is YLDLPWYLRM…LVTENNDVKS (189 aa). One can recognise a TIR domain in the interval 640–781; sequence LQFHAFISYS…LFWANIRAAF (142 aa).

The protein belongs to the Toll-like receptor family. As to quaternary structure, homodimer (via cytoplasmic TIR domain). Heterodimer with TLR2 via their respective extracellular domains. Binds MYD88 via their respective TIR domains. Interacts with CD36, following CD36 stimulation by oxLDL or amyloid-beta 42, and forms a heterodimer with TLR4. The trimeric complex is internalized and triggers inflammatory response. LYN kinase activity facilitates TLR4:TLR6 heterodimerization and signal initiation. The heterodimer TLR2:TLR6 interacts with CD14 and CD36 in response to triacylated lipopeptides. In terms of tissue distribution, detected in monocytes, CD11c+ immature dendritic cells, plasmacytoid pre-dendritic cells and dermal microvessel endothelial cells.

It localises to the cell membrane. It is found in the cytoplasmic vesicle. The protein resides in the phagosome membrane. Its subcellular location is the membrane raft. The protein localises to the golgi apparatus. Its function is as follows. Participates in the innate immune response to Gram-positive bacteria and fungi. Specifically recognizes diacylated and, to a lesser extent, triacylated lipopeptides. In response to diacylated lipopeptides, forms the activation cluster TLR2:TLR6:CD14:CD36, this cluster triggers signaling from the cell surface and subsequently is targeted to the Golgi in a lipid-raft dependent pathway. Acts via MYD88 and TRAF6, leading to NF-kappa-B activation, cytokine secretion and the inflammatory response. Recognizes mycoplasmal macrophage-activating lipopeptide-2kD (MALP-2), soluble tuberculosis factor (STF), phenol-soluble modulin (PSM) and B.burgdorferi outer surface protein A lipoprotein (OspA-L) cooperatively with TLR2. In complex with TLR4, promotes sterile inflammation in monocytes/macrophages in response to oxidized low-density lipoprotein (oxLDL) or amyloid-beta 42. In this context, the initial signal is provided by oxLDL- or amyloid-beta 42-binding to CD36. This event induces the formation of a heterodimer of TLR4 and TLR6, which is rapidly internalized and triggers inflammatory response, leading to the NF-kappa-B-dependent production of CXCL1, CXCL2 and CCL9 cytokines, via MYD88 signaling pathway, and CCL5 cytokine, via TICAM1 signaling pathway, as well as IL1B secretion. The chain is Toll-like receptor 6 (TLR6) from Homo sapiens (Human).